A 312-amino-acid polypeptide reads, in one-letter code: Methionyl-tRNA formyltransferase (312 aa).

Position 109 to 112 (109 to 112 (SLLP)) interacts with (6S)-5,6,7,8-tetrahydrofolate.

The protein belongs to the Fmt family.

The catalysed reaction is L-methionyl-tRNA(fMet) + (6R)-10-formyltetrahydrofolate = N-formyl-L-methionyl-tRNA(fMet) + (6S)-5,6,7,8-tetrahydrofolate + H(+). Functionally, attaches a formyl group to the free amino group of methionyl-tRNA(fMet). The formyl group appears to play a dual role in the initiator identity of N-formylmethionyl-tRNA by promoting its recognition by IF2 and preventing the misappropriation of this tRNA by the elongation apparatus. The protein is Methionyl-tRNA formyltransferase of Ruminiclostridium cellulolyticum (strain ATCC 35319 / DSM 5812 / JCM 6584 / H10) (Clostridium cellulolyticum).